The primary structure comprises 233 residues: 7-cyano-7-deazaguanine synthase (233 aa).

ATP is bound at residue 7-17; the sequence is LSGGLDSAVTS. Zn(2+) contacts are provided by Cys195, Cys206, Cys209, and Cys212.

The protein belongs to the QueC family. Requires Zn(2+) as cofactor.

It catalyses the reaction 7-carboxy-7-deazaguanine + NH4(+) + ATP = 7-cyano-7-deazaguanine + ADP + phosphate + H2O + H(+). It functions in the pathway purine metabolism; 7-cyano-7-deazaguanine biosynthesis. Catalyzes the ATP-dependent conversion of 7-carboxy-7-deazaguanine (CDG) to 7-cyano-7-deazaguanine (preQ(0)). This Methanococcus maripaludis (strain C6 / ATCC BAA-1332) protein is 7-cyano-7-deazaguanine synthase.